The primary structure comprises 154 residues: Myoglobin (154 aa).

Positions 2 to 148 (GLSDDEWNHV…FRNDMASKYK (147 aa)) constitute a Globin domain. Histidine 65 provides a ligand contact to nitrite. Histidine 65 lines the O2 pocket. Histidine 94 provides a ligand contact to heme b.

It belongs to the globin family. In terms of assembly, monomeric.

Its subcellular location is the cytoplasm. The protein resides in the sarcoplasm. It carries out the reaction Fe(III)-heme b-[protein] + nitric oxide + H2O = Fe(II)-heme b-[protein] + nitrite + 2 H(+). The enzyme catalyses H2O2 + AH2 = A + 2 H2O. Its function is as follows. Monomeric heme protein which primary function is to store oxygen and facilitate its diffusion within muscle tissues. Reversibly binds oxygen through a pentacoordinated heme iron and enables its timely and efficient release as needed during periods of heightened demand. Depending on the oxidative conditions of tissues and cells, and in addition to its ability to bind oxygen, it also has a nitrite reductase activity whereby it regulates the production of bioactive nitric oxide. Under stress conditions, like hypoxia and anoxia, it also protects cells against reactive oxygen species thanks to its pseudoperoxidase activity. The polypeptide is Myoglobin (MB) (Caretta caretta (Loggerhead sea turtle)).